Reading from the N-terminus, the 84-residue chain is Hirudin-HM2 (84 aa).

The signal sequence occupies residues 1–20 (MFSLKLFVVFLAVCICVSQA). The tract at residues 21–23 (VSY) is interaction with thrombin active site. Cystine bridges form between Cys-26/Cys-34, Cys-36/Cys-48, and Cys-42/Cys-57. The interval 53–84 (SGNQCVHGEGTPKPKSQTEGDFEEIPDEDILN) is disordered. A glycan (O-linked (GalNAc...) threonine) is linked at Thr-63. Acidic residues predominate over residues 72 to 84 (GDFEEIPDEDILN). The interval 73-84 (DFEEIPDEDILN) is interaction with fibrinogen-binding exosite of thrombin.

It belongs to the protease inhibitor I14 (hirudin) family.

Its subcellular location is the secreted. In terms of biological role, hirudin is a potent thrombin-specific protease inhibitor. It forms a stable non-covalent complex with alpha-thrombin, thereby abolishing its ability to cleave fibrinogen. This is Hirudin-HM2 from Hirudinaria manillensis (Asian medical leech).